The primary structure comprises 156 residues: SsrA-binding protein (156 aa).

This sequence belongs to the SmpB family.

It localises to the cytoplasm. Functionally, required for rescue of stalled ribosomes mediated by trans-translation. Binds to transfer-messenger RNA (tmRNA), required for stable association of tmRNA with ribosomes. tmRNA and SmpB together mimic tRNA shape, replacing the anticodon stem-loop with SmpB. tmRNA is encoded by the ssrA gene; the 2 termini fold to resemble tRNA(Ala) and it encodes a 'tag peptide', a short internal open reading frame. During trans-translation Ala-aminoacylated tmRNA acts like a tRNA, entering the A-site of stalled ribosomes, displacing the stalled mRNA. The ribosome then switches to translate the ORF on the tmRNA; the nascent peptide is terminated with the 'tag peptide' encoded by the tmRNA and targeted for degradation. The ribosome is freed to recommence translation, which seems to be the essential function of trans-translation. In Bacillus velezensis (strain DSM 23117 / BGSC 10A6 / LMG 26770 / FZB42) (Bacillus amyloliquefaciens subsp. plantarum), this protein is SsrA-binding protein.